The following is an 862-amino-acid chain: ATP-dependent helicase Lhr-Core (862 aa).

ATP is bound by residues Q37, K60, T61, D178, E179, V360, R377, and H380. The Helicase ATP-binding domain occupies 41–233 (IMDIHRGRNV…FLVGYSYGSE (193 aa)). Positions 178–181 (DEIH) match the DEAH box motif. A Helicase C-terminal domain is found at 269–424 (ALYDILHDLI…SIKVPENCLD (156 aa)). Residues 425 to 513 (VLAQHIYGMA…LYSTNIGTIP (89 aa)) form a WH domain region. The tract at residues 514–862 (DRSAAVVKCG…HQAIIDEIKR (349 aa)) is domain 4.

The protein belongs to the Lhr helicase family. Lhr-Core subfamily. As to quaternary structure, monomer.

The enzyme catalyses Couples ATP hydrolysis with the unwinding of duplex DNA by translocating in the 3'-5' direction.. The catalysed reaction is ATP + H2O = ADP + phosphate + H(+). Functionally, DNA helicase that translocates in a 3'-5' direction on single-stranded (ss)DNA, probably involved in DNA repair. Most active on three- or four-stranded forked DNA; flayed structures and Holliday junction (HJ) substrates are unwound slightly less well. Also unwinds 3'-tailed duplexes; both RNA:DNA hybrids and double-stranded (ds)DNA with a 3'-single strand (ss)DNA loading strand are unwound. Substrates where the helicase loads on a 3'-ssRNA tail (DNA:RNA and RNA:RNA) were not tested. Blunt-ended dsDNA is not a substrate. Probably involved in replication-coupled DNA repair; remodeling of fork DNA after binding by Lhr generates ssDNA for ATP-dependent DNA translocation. The protein is ATP-dependent helicase Lhr-Core of Methanothermobacter thermautotrophicus (strain ATCC 29096 / DSM 1053 / JCM 10044 / NBRC 100330 / Delta H) (Methanobacterium thermoautotrophicum).